The primary structure comprises 1461 residues: MKSGLFSMNDIFFLVNSIFKYFLILLNGSHLLKLLYSSKENIHIIEGLLCIITGVILKLSLIYIYCTYFMNIYIIKDYRRKNVLNIFNMNNNYKRNGNVIESDDFEYRKLIKKFFFKKVYYSIKKKHKRIELYMLKIYNSNFNYYFCNIRDMCYTIIWYISLYYWRRDTYNMIWGFNKIPTYIYNMLLILLSTSYIDLVMVIISYNKSKYYLMKSKLLIDIFFSAPCTYLFSKFIFVFEHQIDIYFMMGFLRNIKIFLNVSYVRIEHNSILTNTEIKIIRIVLGVLLLCNAFASTIYTIQAIHPYNLDNENFNYFLNSYLDYFYFSIISISTVGYGDIFPINKLSKVVCIIFIFWTFIWVPIQFNDLIISIFSKKKTYGKISMNNQKFILLIGDVEPQQLNVFLFESVAQGNKLKFHLLTTYPINIYDEQIKIADHFCISLYIKNFDLNEKENINLLYSINAQNAYYLFLFSNKFHNGHYNIDTKSFTRLLILKKFLHGKKNAVIELRSNCVSNIVRSIGCENFIIVNLKHSLIVKNIKYPGFITLILNLFTAYNYDISSYNFNDIASYPSLKYIGEFNRGSRTKIFSFIVHKNMVGLIFDKLFYKLYESLGIILVGIETNTTNYYINNKKHKNKNSYVDDNFTTMRKNNMKNKKKKSFKFIYLHLLKKYGHTNHYTQKKKKKKYDNIINHHGSKSKMEYSTQLRHNNKTIKIYDEYNTIETYQNYLNYETINNSRINIYNSDEKKKKYNDVSPTNNILTNYKNGKLHIEKRDDFDNNNNNNNNNIVKSRKKGRENKNDEIINVCININSDIKKKYNNNNNNNNNNDNDNNNIINDHDNYNIYNNLNSNLKCRCLPNTKKNKAQNVNNVTNNKDNDVSVKRIKTHLQDDNTIDNKKELKCYLNLLGKNYAIRDSDKCVVIANSRKVIKYLSKAKSLFWIFEIKSKKKDNISYDLKSVIKTKQTFNKYFTTNIKKKLPTTSIQNNVYVNKNAHIIAMNYHDLFNTYRISRIFTKNNYNYKRKNSRKKHLFRNLNGEFNETKLYHHCNNTHNIKTTDKKNMEKLDKLYFSTKLNSKSNTNIHIHNNNNNNNNNNEHYDDEIKTYYFNLTEKNSHLLLNYKKQLKKKNYINTCYSVNKSDESINKIKNMNSDNNNINSNNINSNINNNNNNNTKLNHTLKNRITFSYMEACEKYFPTENRNNKLLLIINCTCNIIQLIKMFNNKYKYNVIILTDEIPTMNIMDLFKYNVVFIKCKILDDYNLINSGLMNAEYILILPTEAKNINEINEIDMNTIIVTRKITHLLKKKKRTYYINNIITELINPSNVIFLEENKMIKLKDKKSSYDDFFPYVNSSQFYSSNIICETMLYNFMTHHKSFTDFSVCTNTLECLIKFLRIIYICDLSKYYDFSFKKIKTFRDLFYFLSKKNIITIGLYRKGDKKVPFYIYTKPNENCLLRFDDIVYIL.

Helical transmembrane passes span 44–64 (IIEG…LIYI), 142–162 (FNYY…YISL), 183–203 (IYNM…MVII), 218–238 (LIDI…IFVF), 242–262 (IDIY…NVSY), and 281–301 (IVLG…TIQA). An intramembrane region (pore-forming) is located at residues 322-340 (YFYFSIISISTVGYGDIFP). Residues 349–369 (CIIFIFWTFIWVPIQFNDLII) traverse the membrane as a helical segment. Residues 771 to 794 (KRDDFDNNNNNNNNNIVKSRKKGR) form a disordered region.

As to quaternary structure, may form oligomers or interact with other proteins.

The protein resides in the membrane. Its function is as follows. Contributes to transmembrane potassium transport. This is Potassium channel K2 from Plasmodium falciparum (isolate 3D7).